A 349-amino-acid chain; its full sequence is tRNA pseudouridine synthase D (349 aa).

Phe-26 is a substrate binding site. Asp-79 serves as the catalytic Nucleophile. Asn-128 lines the substrate pocket. Positions 154–302 (GVPNYFGSQR…VEGARRAILL (149 aa)) constitute a TRUD domain. Phe-328 is a substrate binding site.

This sequence belongs to the pseudouridine synthase TruD family.

It carries out the reaction uridine(13) in tRNA = pseudouridine(13) in tRNA. Functionally, responsible for synthesis of pseudouridine from uracil-13 in transfer RNAs. The polypeptide is tRNA pseudouridine synthase D (Yersinia enterocolitica serotype O:8 / biotype 1B (strain NCTC 13174 / 8081)).